The following is a 252-amino-acid chain: Small ribosomal subunit protein eS1 (252 aa).

It belongs to the eukaryotic ribosomal protein eS1 family. Component of the small ribosomal subunit. Mature ribosomes consist of a small (40S) and a large (60S) subunit. The 40S subunit contains about 33 different proteins and 1 molecule of RNA (18S). The 60S subunit contains about 49 different proteins and 3 molecules of RNA (25S, 5.8S and 5S).

The protein localises to the cytoplasm. In Enterocytozoon bieneusi (strain H348) (Microsporidian parasite), this protein is Small ribosomal subunit protein eS1.